The chain runs to 95 residues: Aspartyl/glutamyl-tRNA(Asn/Gln) amidotransferase subunit C (95 aa).

Belongs to the GatC family. Heterotrimer of A, B and C subunits.

The enzyme catalyses L-glutamyl-tRNA(Gln) + L-glutamine + ATP + H2O = L-glutaminyl-tRNA(Gln) + L-glutamate + ADP + phosphate + H(+). The catalysed reaction is L-aspartyl-tRNA(Asn) + L-glutamine + ATP + H2O = L-asparaginyl-tRNA(Asn) + L-glutamate + ADP + phosphate + 2 H(+). Functionally, allows the formation of correctly charged Asn-tRNA(Asn) or Gln-tRNA(Gln) through the transamidation of misacylated Asp-tRNA(Asn) or Glu-tRNA(Gln) in organisms which lack either or both of asparaginyl-tRNA or glutaminyl-tRNA synthetases. The reaction takes place in the presence of glutamine and ATP through an activated phospho-Asp-tRNA(Asn) or phospho-Glu-tRNA(Gln). The polypeptide is Aspartyl/glutamyl-tRNA(Asn/Gln) amidotransferase subunit C (Rhizobium johnstonii (strain DSM 114642 / LMG 32736 / 3841) (Rhizobium leguminosarum bv. viciae)).